We begin with the raw amino-acid sequence, 131 residues long: MAIFGKLTKLKSAIKKWPSLTKNHHSTMCTASTAVSEVSKCEDLHVVYVGKSRRPYMLSSHVIAHPLFQELLDRSSRFIEERHDQETVLVACEVVLFEHLLWMLKNSSSDHGDEDDRERGSVEELAEFYTY.

Belongs to the ARG7 family.

May be involved in the regulation of ethylene receptor signaling. Promotes cell expansion and plant growth. This chain is Auxin-responsive protein SAUR77, found in Arabidopsis thaliana (Mouse-ear cress).